Here is a 212-residue protein sequence, read N- to C-terminus: Transcription antitermination protein NusB (212 aa).

This sequence belongs to the NusB family.

In terms of biological role, involved in transcription antitermination. Required for transcription of ribosomal RNA (rRNA) genes. Binds specifically to the boxA antiterminator sequence of the ribosomal RNA (rrn) operons. This Gloeothece citriformis (strain PCC 7424) (Cyanothece sp. (strain PCC 7424)) protein is Transcription antitermination protein NusB.